A 179-amino-acid chain; its full sequence is Transcription factor 21 (179 aa).

The disordered stretch occupies residues 20–87 (CDGLKMDSNK…QVQRNAANAR (68 aa)). Over residues 33 to 46 (TSNESTEESSNCEN) the composition is skewed to low complexity. Residues 70–80 (SGVSQEGKQVQ) show a composition bias toward polar residues. The bHLH domain occupies 79–131 (VQRNAANARERARMRVLSKAFSRLKTTLPWVPPDTKLSKLDTLRLASSYIAHL).

As to quaternary structure, efficient DNA binding requires dimerization with another bHLH protein. Forms a heterodimer with TCF3 and binds the E box (5'-CANNTG-3').

It is found in the nucleus. In terms of biological role, involved in epithelial-mesenchymal interactions in kidney and lung morphogenesis that include epithelial differentiation and branching morphogenesis. May play a role in the specification or differentiation of one or more subsets of epicardial cell types. This Homo sapiens (Human) protein is Transcription factor 21 (TCF21).